The sequence spans 484 residues: Transcription factor MYB88 (484 aa).

A disordered region spans residues 1 to 20 (MEETTKQNNMKKKKKILLHS). A Nuclear localization signal motif is present at residues 13–20 (KKKILLHS). 2 HTH myb-type domains span residues 25–76 (KKER…YTYL) and 77–131 (NSDF…KKRA). DNA-binding regions (H-T-H motif) lie at residues 53 to 76 (WAII…YTYL) and 104 to 127 (WTEI…TTLC). 3 disordered regions span residues 215–241 (NATS…DKSN), 321–383 (RSSN…GGEL), and 458–484 (GVES…LDSL). A compositionally biased stretch (basic and acidic residues) spans 232 to 241 (KESDGEDKSN). Residues 339 to 348 (SPASSEYSSG) show a composition bias toward low complexity. Residues 354-380 (TIMTHPSGDKTQQLMSDTQTTSHQQNG) show a composition bias toward polar residues. Residues 463–476 (SPYPSANPSQPPPC) show a composition bias toward pro residues.

In terms of assembly, interacts with RBR1. As to expression, expressed at low levels in all organs including roots, leaves, hypocotyls stems, flowers, siliques and buds.

Its subcellular location is the nucleus. Its function is as follows. Transcription factor that binds to DNA in promoters cis-regulatory element 5'-GGCGCGC-3' of cell cycle genes, including cyclins, cyclin-dependent kinases (CDKs), and components of the pre-replication complex. Binds to DNA in promoters cis-regulatory element 5'-AGCCG-3' of auxin regulated genes (e.g. PIN3 and PIN7). Together with FAMA and MYB124, ensures that stomata contain just two guard cells (GCs) by enforcing a single symmetric precursor cell division before stomatal maturity. Represses the expression of the mitosis-inducing factors CDKB1-1 and CDKA-1, specifically required for the last guard mother cells (GMC) symmetric divisions in the stomatal pathway. Represses CYCA2-3 in newly formed guard cells. Together with MYB88, regulates stomata spacing by restricting divisions late in the stomatal cell lineage thus limiting the number of GMC divisions. In collaboration with CDKB1-1 and CDKB1-2, restrict the G1/S transition and chloroplast and nuclear number during stomatal formation, and normally maintain fate and developmental progression throughout the stomatal cell lineage. Involved in sensing and/or transducing abiotic stress (e.g. drought and salt), probably via the positive regulation of NAC019. Regulates female reproduction being required for entry into megasporogenesis, probably via the regulation of cell cycle genes. Plays a minor role in lateral roots (LRs) initiation. Involved complementarily in establishing the gravitropic set-point angles of lateral roots by regulating the transcription of PIN3 and PIN7 in gravity-sensing cells of primary and lateral roots. The polypeptide is Transcription factor MYB88 (Arabidopsis thaliana (Mouse-ear cress)).